Consider the following 327-residue polypeptide: Tagatose 1,6-diphosphate aldolase 2 (327 aa).

Belongs to the aldolase LacD family.

It catalyses the reaction D-tagatofuranose 1,6-bisphosphate = D-glyceraldehyde 3-phosphate + dihydroxyacetone phosphate. It functions in the pathway carbohydrate metabolism; D-tagatose 6-phosphate degradation; D-glyceraldehyde 3-phosphate and glycerone phosphate from D-tagatose 6-phosphate: step 2/2. This chain is Tagatose 1,6-diphosphate aldolase 2 (lacD2), found in Streptococcus pyogenes serotype M1.